The primary structure comprises 439 residues: MLRFAPSPTGDMHIGNLRAAIFNYIVAKQQHKPFLIRIEDTDKERNIEGKDQEILEILKLMGMNWDKLVYQSHNIDYHREMAEKLLKENKAFYCYASVGFLEQEKEKAKNEKRPFRYLDEWAALEKNQHNTPVVRLKAPNHAVSFNDAIKKEVKFEPYELDSFVLLRKDKSPTYNFACACDDLLYEISLIIRGEDHVSNTPKQILIQQALGSNNPIIYAHLPIILDEASGKKMSKRDEASSVKWLLNQGFLPVAIVNYLITIGNKVPKEVFSLDEALEWFSLENLSNSPAHFNLKYLKHLNHQHLKRLDDEKLLELSQIKDRNLLGLLRLFIEECDTLLELKEKISLFLEPKDIVKTYENEDFKERCSILFNALKSMDFQAYKDFESFKKEAMRLSQLKGKDFFKPLRILLIGDSHGVELPLIFPYIQSHYQEILRLKA.

The short motif at 6 to 16 is the 'HIGH' region element; that stretch reads PSPTGDMHIGN. The 'KMSKS' region signature appears at 232-236; that stretch reads KMSKR. K235 provides a ligand contact to ATP.

The protein belongs to the class-I aminoacyl-tRNA synthetase family. Glutamate--tRNA ligase type 1 subfamily. As to quaternary structure, monomer.

It is found in the cytoplasm. The enzyme catalyses tRNA(Glu) + L-glutamate + ATP = L-glutamyl-tRNA(Glu) + AMP + diphosphate. Catalyzes the attachment of glutamate to tRNA(Glu) in a two-step reaction: glutamate is first activated by ATP to form Glu-AMP and then transferred to the acceptor end of tRNA(Glu). The protein is Glutamate--tRNA ligase 1 of Helicobacter acinonychis (strain Sheeba).